Reading from the N-terminus, the 460-residue chain is Telomere-binding protein homolog (460 aa).

The protein belongs to the telombin family.

It is found in the nucleus. Its subcellular location is the chromosome. The protein localises to the telomere. Functionally, may bind telomeric T4G4 sequences. The sequence is that of Telomere-binding protein homolog from Euplotes crassus.